The primary structure comprises 526 residues: MNIVNSLDLSNITTNHVAAAVCAGIAVYAIVAGRNRGKKYPPGPKGHPLIGSLFEMPIQNAHVVYKEWAKTYGDMIFFKVLGQPFLILSSEETITDLLDKRSTIYSSRPRMPMVVELMGWDYTLGLLPYGERWRFLRREFHRFMSPTAVSNYRQIQENSVYTFLNNLVESPEQFSKHLRLFYGSISMKVSYGINVKSAEDQYLLDAEGAMSGFMEAGIPGRFWVDLFPALKYVPSWMPGAEFKRKAARWARLNDISLERPFKHVLDQLKKGVASQSVSATLIEELPDQNSPDRKEKETIARNISATTFLAGIDTIHSTTQAFFYAMAQFPEVQKKAQAEIDAVVGDKRLPTFEDRDQLPYVNALVKELIRWSEVAPLGIYHSTTEDDEYKGYFIPKGTIVMTNAWSILTDPVTYPDPFAFKPERYLKNGVMNPDAPRPEDLAFGRGRRICPGRYLADETLFMTSVGVLAGFNISPPLDKSGKPIKLKNERVGTITLTPPKFECRIEPRSPAIRTMIHDTAESISAL.

N-linked (GlcNAc...) asparagine glycosylation occurs at Asn-11. A helical transmembrane segment spans residues Ile-12–Val-31. The N-linked (GlcNAc...) asparagine glycan is linked to Asn-302. Residue Cys-450 participates in heme binding.

This sequence belongs to the cytochrome P450 family. Heme is required as a cofactor.

It localises to the membrane. Its pathway is secondary metabolite biosynthesis. In terms of biological role, cytochrome P450 monooxygenase; part of the gene cluster that mediates the biosynthesis of alpha-cuprenene and oxidized derivatives. The alpha-cuprenene synthase COP6 is the only sesquiterpene synthase identified in C.cinereus that appears to be part of a biosynthetic gene cluster and is highly specific since it catalyzes the cyclization of (2E,6E)-farnesyl diphosphate into only one product, alpha-cuprenene. The cytochrome P450 monooxygenase COX2 then oxidizes the cyclohexadiene ring of alpha-cuprenene at positions 1 and 4, yielding first alpha-cuparene, followed by alpha-cuparophenol and a further yet unidentified compound resulting from one additional oxidation step. The cytochrome P450 monooxygenase COX1 then likely catalyzes the oxidation at position 9 of the pentane ring of alpha-cuprenene to give the corresponding hydroxy or ketone derivatives. In Coprinopsis cinerea (strain Okayama-7 / 130 / ATCC MYA-4618 / FGSC 9003) (Inky cap fungus), this protein is Cytochrome P450 monooxygenase COX2.